The primary structure comprises 205 residues: uncharacterized protein (205 aa).

The next 4 membrane-spanning stretches (helical) occupy residues 18-38 (ATVNVIHPISLCLSWFLGTIG), 69-89 (LGIFQHLFYPIIPLLAFCFYA), 106-126 (VVWILAVSRHIVFLENSYYIM), and 127-147 (LLHPHHLHHPHPPFLIFLFLI).

It is found in the mitochondrion membrane. This is an uncharacterized protein from Arabidopsis thaliana (Mouse-ear cress).